Reading from the N-terminus, the 424-residue chain is Serine hydroxymethyltransferase (424 aa).

(6S)-5,6,7,8-tetrahydrofolate-binding positions include Leu123 and Gly127–Leu129. Lys232 is modified (N6-(pyridoxal phosphate)lysine). Glu245 is a binding site for (6S)-5,6,7,8-tetrahydrofolate.

The protein belongs to the SHMT family. In terms of assembly, homodimer. Requires pyridoxal 5'-phosphate as cofactor.

It localises to the cytoplasm. The enzyme catalyses (6R)-5,10-methylene-5,6,7,8-tetrahydrofolate + glycine + H2O = (6S)-5,6,7,8-tetrahydrofolate + L-serine. The protein operates within one-carbon metabolism; tetrahydrofolate interconversion. It functions in the pathway amino-acid biosynthesis; glycine biosynthesis; glycine from L-serine: step 1/1. Functionally, catalyzes the reversible interconversion of serine and glycine with tetrahydrofolate (THF) serving as the one-carbon carrier. This reaction serves as the major source of one-carbon groups required for the biosynthesis of purines, thymidylate, methionine, and other important biomolecules. Also exhibits THF-independent aldolase activity toward beta-hydroxyamino acids, producing glycine and aldehydes, via a retro-aldol mechanism. The sequence is that of Serine hydroxymethyltransferase from Kocuria rhizophila (strain ATCC 9341 / DSM 348 / NBRC 103217 / DC2201).